We begin with the raw amino-acid sequence, 803 residues long: Putative metal ion transporter C27B12.12c (803 aa).

The segment covering 1–20 has biased composition (polar residues); sequence MSFQQPSNGAQGGNNNALEK. Residues 1–255 are disordered; the sequence is MSFQQPSNGA…SSDVSGSDEN (255 aa). Over residues 21 to 45 the composition is skewed to low complexity; that stretch reads TSSNEATSSSSTQVSSLSASGISVS. The segment covering 58-82 has biased composition (polar residues); that stretch reads MQVQSSQHLEANVQSPVSSQTTYAT. 2 stretches are compositionally biased toward basic residues: residues 105–123 and 152–166; these read KPKKKKRSRRNRKASRKKI and QSNKKHRGRRVKHSP. Low complexity-rich tracts occupy residues 181-194 and 218-253; these read ALSASMGSSSQHAS and SSSSDSLYSVSSMSIKNDSNSDSLSSSSSSDVSGSD. A Phosphoserine modification is found at Ser-318. Disordered regions lie at residues 326-349 and 406-431; these read PRLKSTHSSIADNEDREVDSQVDE and FEPHWNDLSPHDPNDPSSSLHSNNAE. Residues 337–347 show a composition bias toward acidic residues; sequence DNEDREVDSQV. The segment covering 406 to 419 has biased composition (basic and acidic residues); the sequence is FEPHWNDLSPHDPN. Residues 420 to 430 show a composition bias toward polar residues; sequence DPSSSLHSNNA. A phosphoserine mark is found at Ser-449 and Ser-452. Helical transmembrane passes span 745–765 and 776–796; these read ITLIGTLLVPMNLVTGLFGMN and LAWFFGILGVLLGSIAIGWII.

It belongs to the CorA metal ion transporter (MIT) (TC 1.A.35) family.

The protein resides in the cytoplasm. It is found in the membrane. This is Putative metal ion transporter C27B12.12c from Schizosaccharomyces pombe (strain 972 / ATCC 24843) (Fission yeast).